We begin with the raw amino-acid sequence, 114 residues long: NADH dehydrogenase [ubiquinone] 1 subunit C2, isoform 2 (114 aa).

The chain crosses the membrane as a helical span at residues G56–V75.

Belongs to the complex I NDUFC2 subunit family. In terms of assembly, complex I is composed of 45 different subunits.

It localises to the mitochondrion inner membrane. In terms of biological role, accessory subunit of the mitochondrial membrane respiratory chain NADH dehydrogenase (Complex I), that is believed not to be involved in catalysis. Complex I functions in the transfer of electrons from NADH to the respiratory chain. The immediate electron acceptor for the enzyme is believed to be ubiquinone. The chain is NADH dehydrogenase [ubiquinone] 1 subunit C2, isoform 2 (NDUFC2-KCTD14) from Homo sapiens (Human).